A 480-amino-acid polypeptide reads, in one-letter code: Protein disulfide-isomerase 5-4 (480 aa).

N74 and N99 each carry an N-linked (GlcNAc...) asparagine glycan. The Thioredoxin domain occupies 120–263 (FHAGEVLSLI…LVKMVVSLVE (144 aa)). Catalysis depends on nucleophile residues C170 and C173. The cysteines at positions 170 and 173 are disulfide-linked. 3 N-linked (GlcNAc...) asparagine glycosylation sites follow: N280, N326, and N376. The chain crosses the membrane as a helical span at residues 439–459 (FSHFITNVCAIIGGVFTVAGI).

This sequence belongs to the protein disulfide isomerase family. In terms of tissue distribution, widely expressed.

The protein resides in the membrane. In terms of biological role, acts as a protein-folding catalyst that interacts with nascent polypeptides to catalyze the formation, isomerization, and reduction or oxidation of disulfide bonds. This chain is Protein disulfide-isomerase 5-4 (PDIL5-4), found in Arabidopsis thaliana (Mouse-ear cress).